A 168-amino-acid polypeptide reads, in one-letter code: Vasopressin-neurophysin 2-copeptin (168 aa).

The signal sequence occupies residues 1–23 (MLAMMLNTTLSACFLSLLALTSA). Cys-24 and Cys-29 form a disulfide bridge. Gly-32 is subject to Glycine amide. Intrachain disulfides connect Cys-45–Cys-89, Cys-48–Cys-62, Cys-56–Cys-79, Cys-63–Cys-69, Cys-96–Cys-108, Cys-102–Cys-120, and Cys-109–Cys-114. Asn-135 carries an N-linked (GlcNAc...) asparagine glycan.

The protein belongs to the vasopressin/oxytocin family. As to quaternary structure, interacts with vasopressin receptors V1bR/AVPR1B (Ki=85 pM), V1aR/AVPR1A (Ki=0.6 nM) and V2R/AVPR2 (Ki=4.9 nM). Interacts with oxytocin receptor (OXTR) (Ki=110 nM).

The protein resides in the secreted. Its function is as follows. Neurophysin 2 specifically binds vasopressin. Functionally, vasopressin has a direct antidiuretic action on the kidney, it also causes vasoconstriction of the peripheral vessels. Acts by binding to vasopressin receptors (V1bR/AVPR1B, V1aR/AVPR1A, and V2R/AVPR2). The chain is Vasopressin-neurophysin 2-copeptin (Avp) from Rattus norvegicus (Rat).